A 759-amino-acid polypeptide reads, in one-letter code: Glycerol-3-phosphate O-acyltransferase 1 (759 aa).

Over Met-1–Lys-48 the chain is Lumenal. A helical transmembrane segment spans residues Ile-49 to Ile-69. Over Arg-70–Gly-434 the chain is Cytoplasmic. The HXXXXD motif motif lies at His-414–Asp-419. Residues Leu-435–Leu-449 traverse the membrane as a helical segment. A topological domain (lumenal) is located at residue Ala-450. The helical transmembrane segment at Met-451–Lys-465 threads the bilayer. Residues Arg-466–Lys-493 lie on the Cytoplasmic side of the membrane. The chain crosses the membrane as a helical span at residues Ile-494 to Tyr-514. Residues Tyr-515–Lys-523 lie on the Lumenal side of the membrane. A helical transmembrane segment spans residues Ile-524–Val-544. The Cytoplasmic portion of the chain corresponds to Gly-545–Ala-759. 3 disordered regions span residues Glu-613 to Asn-667, Arg-684 to Val-705, and Ile-729 to Ala-759. Positions Arg-647–Asp-659 are enriched in basic and acidic residues. Residues Ser-688–Glu-702 are compositionally biased toward low complexity. The segment covering Glu-736–Ala-759 has biased composition (acidic residues).

The protein belongs to the GPAT/DAPAT family.

Its subcellular location is the endoplasmic reticulum membrane. It catalyses the reaction sn-glycerol 3-phosphate + an acyl-CoA = a 1-acyl-sn-glycero-3-phosphate + CoA. The catalysed reaction is dihydroxyacetone phosphate + an acyl-CoA = a 1-acylglycerone 3-phosphate + CoA. The enzyme catalyses sn-glycerol 3-phosphate + hexadecanoyl-CoA = 1-hexadecanoyl-sn-glycero-3-phosphate + CoA. It carries out the reaction (9Z)-hexadecenoyl-CoA + sn-glycerol 3-phosphate = 1-(9Z-hexadecenoyl)-sn-glycero-3-phosphate + CoA. It catalyses the reaction sn-glycerol 3-phosphate + octadecanoyl-CoA = 1-octadecanoyl-sn-glycero-3-phosphate + CoA. The catalysed reaction is sn-glycerol 3-phosphate + (9Z)-octadecenoyl-CoA = 1-(9Z-octadecenoyl)-sn-glycero-3-phosphate + CoA. The protein operates within phospholipid metabolism; CDP-diacylglycerol biosynthesis; CDP-diacylglycerol from sn-glycerol 3-phosphate: step 1/3. Its function is as follows. Dual substrate-specific glycerol-3-phosphate/dihydroxyacetone phosphate sn-1 acyltransferase, catalyzing the first and committed reaction in the de novo synthesis of glycerophospholipids and triacylglycerols (TAGs). Prefers Gly-3-P over dihydroxyacetone phosphate and has a marked preference for 16-carbon fatty acyl chains. Transfers a fatty acid from fatty acyl-CoA to the sn-1 position of glycerol-3-phosphate to produce lysophosphatidic acid (LysoPA). These lipids not only are precursors of glycerolipids, but also are dynamic components of signal transduction systems that control cell physiology. SCT1 is the primary supplier of diacylglycerols (DAG), used mainly in TAG synthesis and phosphatidylcholine (PC) synthesis through the CDP-choline pathway. Regulates fatty acid desaturation, that is, the ratio of unsaturated versus saturated fatty acyl chains, by competing with the desaturase OLE1 for the common substrate C16:0-CoA. Sequesters C16:0-CoA into lipids, thereby shielding it from desaturation by OLE1. In Saccharomyces cerevisiae (strain ATCC 204508 / S288c) (Baker's yeast), this protein is Glycerol-3-phosphate O-acyltransferase 1.